The sequence spans 332 residues: Melanocortin receptor 4 (332 aa).

The Extracellular segment spans residues 1 to 43 (MVNSTHRGMHASLHLWNRSSHRLHSNASESLGKGYSDGGCYEQ). Residues N3, N17, and N26 are each glycosylated (N-linked (GlcNAc...) asparagine). Disulfide bonds link C40/C279 and C271/C277. Residues 44–69 (LFVSPEVFVTLGVISLLENILVIVAI) traverse the membrane as a helical segment. Residues 70 to 81 (AKNKNLHSPMYF) are Cytoplasmic-facing. The helical transmembrane segment at 82-106 (FICSLAVADMLVSVSNGSETIVITL) threads the bilayer. Ca(2+) contacts are provided by E100, D122, and D126. Residues 107–123 (LNSTDTDTQSFTVNIDN) are Extracellular-facing. The chain crosses the membrane as a helical span at residues 124 to 145 (VIDSVICSSLLASICSLLSIAV). At 146 to 165 (DRYFTIFYALQYHNIMTVKR) the chain is on the cytoplasmic side. A helical membrane pass occupies residues 166 to 186 (VRIIISCIWAACTVSGILFII). The Extracellular segment spans residues 187 to 191 (YSDSS). A helical transmembrane segment spans residues 192-215 (AVIICLITMFFTMLALMASLYVHM). The Cytoplasmic segment spans residues 216-248 (FLMARLHIKRIAVLPGTGAIRQGANMKGAITLT). The helical transmembrane segment at 249–271 (ILIGVFVVCWAPFFLHLIFYISC) threads the bilayer. Topologically, residues 272–280 (PQNPYCVCF) are extracellular. The helical transmembrane segment at 281-304 (MSHFNLYLILIMCNSVIDPLIYAL) threads the bilayer. The Cytoplasmic segment spans residues 305-332 (RSQELRKTFKEIICCYPLGGLCDLSSRY). A lipid anchor (S-palmitoyl cysteine) is attached at C318.

This sequence belongs to the G-protein coupled receptor 1 family. Homodimer; disulfide-linked, also forms higher order oligomers. Interacts with GNAS. Interacts with ATRNL1. Interacts with MGRN1; this interaction competes with GNAS-binding and thus inhibits agonist-induced cAMP production. Interacts with MRAP and MRAP2; these associated factors increase ligand-sensitivity and generation of cAMP.

The protein localises to the cell membrane. In terms of biological role, hormone receptor that acts as a key component of the leptin-melanocortin pathway at the intersection of homeostatic maintenance of energetic state. Plays a role in regulating food intake: activation by a stimulating hormone such as anorexigenic alpha-melanocyte stimulating hormone (alpha-MSH) inhibits appetite, whereas binding to a natural antagonist like Agouti-related protein/AGRP promotes appetite. G-protein-coupled receptor that activates conventional Galphas signaling leading to induction of anorexogenic signaling in the hypothalamus to result in negative energy balance. Regulates the firing activity of neurons from the hypothalamus by alpha-MSH and AGRP independently of Galphas signaling by ligand-induced coupling of closure of inwardly rectifying potassium channel KCNJ13. In intestinal epithelial cells, plays a role in the inhibition of hepatic glucose production via nesfatin-1/NUCB2 leading to increased cyclic adenosine monophosphate (cAMP) levels and glucagon-like peptide 1 (GLP-1) secretion in the intestinal epithelium. The sequence is that of Melanocortin receptor 4 (MC4R) from Macaca fascicularis (Crab-eating macaque).